The following is a 352-amino-acid chain: Ion-translocating oxidoreductase complex subunit D (352 aa).

A run of 5 helical transmembrane segments spans residues 20–40 (IMLL…WFFG), 42–62 (GTLV…ALVL), 78–109 (ALLT…VIIA), 123–143 (PAMI…TSWL), and 148–168 (IAVN…GHTA). FMN phosphoryl threonine is present on threonine 187. The next 5 membrane-spanning stretches (helical) occupy residues 214-234 (ILAG…GLWL), 242-262 (WHIP…GWLF), 267-287 (LAAP…FFIL), 301-321 (LIFG…GGYP), and 322-342 (DGVA…DYYT).

It belongs to the NqrB/RnfD family. As to quaternary structure, the complex is composed of six subunits: RsxA, RsxB, RsxC, RsxD, RsxE and RsxG. FMN serves as cofactor.

It is found in the cell inner membrane. Part of a membrane-bound complex that couples electron transfer with translocation of ions across the membrane. Required to maintain the reduced state of SoxR. This is Ion-translocating oxidoreductase complex subunit D from Escherichia coli (strain SE11).